The sequence spans 217 residues: Probable glutathione S-transferase (217 aa).

Positions 2–81 constitute a GST N-terminal domain; sequence AEVKLLGLRY…YIDEAFEGPS (80 aa). Glutathione contacts are provided by residues Ser12, Lys39, Ile53, and 65 to 66; that span reads ES. Residues 86-210 enclose the GST C-terminal domain; sequence DPYDRALARF…ELLIRYRAYI (125 aa).

Belongs to the GST superfamily. HSP26 family.

It carries out the reaction RX + glutathione = an S-substituted glutathione + a halide anion + H(+). This Solanum tuberosum (Potato) protein is Probable glutathione S-transferase (PRP1).